A 214-amino-acid polypeptide reads, in one-letter code: Probable transaldolase (214 aa).

Lys-83 functions as the Schiff-base intermediate with substrate in the catalytic mechanism.

This sequence belongs to the transaldolase family. Type 3B subfamily.

It localises to the cytoplasm. It catalyses the reaction D-sedoheptulose 7-phosphate + D-glyceraldehyde 3-phosphate = D-erythrose 4-phosphate + beta-D-fructose 6-phosphate. The protein operates within carbohydrate degradation; pentose phosphate pathway; D-glyceraldehyde 3-phosphate and beta-D-fructose 6-phosphate from D-ribose 5-phosphate and D-xylulose 5-phosphate (non-oxidative stage): step 2/3. Functionally, transaldolase is important for the balance of metabolites in the pentose-phosphate pathway. This chain is Probable transaldolase, found in Leptospira interrogans serogroup Icterohaemorrhagiae serovar copenhageni (strain Fiocruz L1-130).